A 305-amino-acid polypeptide reads, in one-letter code: Ribonuclease BN (305 aa).

His-64, His-66, Asp-68, His-69, His-141, Asp-212, and His-270 together coordinate Zn(2+). The active-site Proton acceptor is Asp-68.

The protein belongs to the RNase Z family. RNase BN subfamily. As to quaternary structure, homodimer. The cofactor is Zn(2+).

Its function is as follows. Zinc phosphodiesterase, which has both exoribonuclease and endoribonuclease activities. In Escherichia coli O45:K1 (strain S88 / ExPEC), this protein is Ribonuclease BN.